Here is a 140-residue protein sequence, read N- to C-terminus: Sex-regulated protein janus-B (140 aa).

Position 42 (Arg42) interacts with substrate. The active-site Proton acceptor is the His69. 110 to 112 (SRT) serves as a coordination point for substrate.

This sequence belongs to the janus family.

Its function is as follows. JanA and janB regulate somatic sex differentiation. This Drosophila yakuba (Fruit fly) protein is Sex-regulated protein janus-B (janB).